A 191-amino-acid polypeptide reads, in one-letter code: Peptidyl-tRNA hydrolase (191 aa).

A tRNA-binding site is contributed by Y16. The active-site Proton acceptor is the H21. Positions 66, 68, and 114 each coordinate tRNA.

This sequence belongs to the PTH family. Monomer.

Its subcellular location is the cytoplasm. It catalyses the reaction an N-acyl-L-alpha-aminoacyl-tRNA + H2O = an N-acyl-L-amino acid + a tRNA + H(+). Functionally, hydrolyzes ribosome-free peptidyl-tRNAs (with 1 or more amino acids incorporated), which drop off the ribosome during protein synthesis, or as a result of ribosome stalling. Its function is as follows. Catalyzes the release of premature peptidyl moieties from peptidyl-tRNA molecules trapped in stalled 50S ribosomal subunits, and thus maintains levels of free tRNAs and 50S ribosomes. This Geotalea uraniireducens (strain Rf4) (Geobacter uraniireducens) protein is Peptidyl-tRNA hydrolase.